Consider the following 534-residue polypeptide: UDP-glucuronosyltransferase 1A4 (534 aa).

A signal peptide spans 1–28 (MARGLQVPLPRLATGLLLLLSVQPWAES). N-linked (GlcNAc...) asparagine glycans are attached at residues Asn-119, Asn-142, Asn-296, and Asn-348. A helical transmembrane segment spans residues 492–508 (VIGFLLAVVLTVAFITF).

The protein belongs to the UDP-glycosyltransferase family. As to quaternary structure, homodimer. Homooligomer. Interacts with UGT1A1, UGT1A3, UGT1A6, UGT1A7, UGT1A8, UGT1A9 and UGT1A10 to form heterodimers. Isoform 1 interacts with isoform 2/i2 suggesting that oligomerization is involved in negative regulation of transferase activity by isoform 2. Isoform 1 also interacts with respective i2 isoforms of UGT1A1, UGT1A3, UGT1A6, UGT1A7, UGT1A8, UGT1A9 and UGT1A10. In terms of tissue distribution, expressed in liver. Expressed in kidney, colon and small intestine. Not expressed in esophagus. Not expressed in skin. As to expression, expressed in liver, kidney, colon, esophagus and small intestine.

The protein resides in the endoplasmic reticulum membrane. The enzyme catalyses glucuronate acceptor + UDP-alpha-D-glucuronate = acceptor beta-D-glucuronoside + UDP + H(+). It catalyses the reaction calcidiol + UDP-alpha-D-glucuronate = calcidiol 25-O-(beta-D-glucuronide) + UDP + H(+). The catalysed reaction is calcidiol + UDP-alpha-D-glucuronate = calcidiol 3-O-(beta-D-glucuronide) + UDP + H(+). It carries out the reaction calcitriol + UDP-alpha-D-glucuronate = calcitriol 25-O-(beta-D-glucuronide) + UDP + H(+). The enzyme catalyses (5Z,8Z,11Z,14Z)-eicosatetraenoate + UDP-alpha-D-glucuronate = O-[(5Z),(8Z),(11Z),(14Z)-eicosatetraenoyl]-beta-D-glucuronate + UDP. It catalyses the reaction 15-hydroxy-(5Z,8Z,11Z,13E)-eicosatetraenoate + UDP-alpha-D-glucuronate = 15-O-(beta-D-glucuronosyl)-(5Z,8Z,11Z,14Z)-eicosatetraenoate + UDP + H(+). The catalysed reaction is 20-hydroxy-(5Z,8Z,11Z,14Z)-eicosatetraenoate + UDP-alpha-D-glucuronate = 20-O-(beta-D-glucuronosyl)-(5Z,8Z,11Z,14Z)-eicosatetraenoate + UDP + H(+). Functionally, UDP-glucuronosyltransferase (UGT) that catalyzes phase II biotransformation reactions in which lipophilic substrates are conjugated with glucuronic acid to increase the metabolite's water solubility, thereby facilitating excretion into either the urine or bile. Essential for the elimination and detoxification of drugs, xenobiotics and endogenous compounds. Involved in the glucuronidation of calcidiol, which is the major circulating form of vitamin D3 essential for the regulation of calcium and phosphate homeostasis. Also glucuronidates the biologically active form of vitamin D3, calcitriol, probably leading to its biliary transport and intestinal reabsorption. Involved in the glucuronidation of arachidonic acid (AA) and AA-derived eicosanoids including 15-HETE, 20-HETE and PGB1. In terms of biological role, lacks UDP-glucuronosyltransferase (UGT) activity but acts as a negative regulator of isoform 1. The protein is UDP-glucuronosyltransferase 1A4 of Homo sapiens (Human).